The primary structure comprises 465 residues: Flavin-containing monooxygenase FMO GS-OX-like 2 (465 aa).

Gly18 to Gly23 contacts FAD. Gly217–Gly222 provides a ligand contact to NADP(+).

This sequence belongs to the FMO family. The cofactor is FAD.

In terms of biological role, catalyzes the conversion of methylthioalkyl glucosinolates of any chain length into methylsulfinylalkyl glucosinolates. The chain is Flavin-containing monooxygenase FMO GS-OX-like 2 from Arabidopsis thaliana (Mouse-ear cress).